Here is a 302-residue protein sequence, read N- to C-terminus: Putative RING-H2 finger protein ATL35 (302 aa).

Residues 1–31 (MTIFARDLIYRIETKVLLPLFLVHLLPYVTC) form the signal peptide. The helical transmembrane segment at 50–70 (TVIAIIVLAIFISLSMVACFL) threads the bilayer. The segment at 123-165 (CAICLSEFVDKETLRWMPPCSHTFHANCIDVWLSSQSTCPACR) adopts an RING-type; atypical zinc-finger fold. Ser-226 is modified (phosphoserine).

The protein belongs to the RING-type zinc finger family. ATL subfamily.

The protein resides in the membrane. It carries out the reaction S-ubiquitinyl-[E2 ubiquitin-conjugating enzyme]-L-cysteine + [acceptor protein]-L-lysine = [E2 ubiquitin-conjugating enzyme]-L-cysteine + N(6)-ubiquitinyl-[acceptor protein]-L-lysine.. It participates in protein modification; protein ubiquitination. The chain is Putative RING-H2 finger protein ATL35 (ATL35) from Arabidopsis thaliana (Mouse-ear cress).